We begin with the raw amino-acid sequence, 141 residues long: Ribonuclease P protein component (141 aa).

Positions arginine 114 to glutamate 134 are enriched in basic and acidic residues. Residues arginine 114–lysine 141 are disordered.

It belongs to the RnpA family. Consists of a catalytic RNA component (M1 or rnpB) and a protein subunit.

It carries out the reaction Endonucleolytic cleavage of RNA, removing 5'-extranucleotides from tRNA precursor.. RNaseP catalyzes the removal of the 5'-leader sequence from pre-tRNA to produce the mature 5'-terminus. It can also cleave other RNA substrates such as 4.5S RNA. The protein component plays an auxiliary but essential role in vivo by binding to the 5'-leader sequence and broadening the substrate specificity of the ribozyme. The polypeptide is Ribonuclease P protein component (Brucella anthropi (strain ATCC 49188 / DSM 6882 / CCUG 24695 / JCM 21032 / LMG 3331 / NBRC 15819 / NCTC 12168 / Alc 37) (Ochrobactrum anthropi)).